The primary structure comprises 255 residues: Protein N-terminal and lysine N-methyltransferase efm7 (255 aa).

The disordered stretch occupies residues 1-25; the sequence is MADNDFEGFGIFEEPEGFRPSTPPP. S-adenosyl-L-methionine is bound by residues tryptophan 58, 84–86, aspartate 106, tryptophan 137, and serine 162; that span reads GAG.

This sequence belongs to the class I-like SAM-binding methyltransferase superfamily. EFM7 family.

Its subcellular location is the cytoplasm. In terms of biological role, S-adenosyl-L-methionine-dependent protein methyltransferase that trimethylates the N-terminal glycine 'Gly-2' of elongation factor 1-alpha, before also catalyzing the mono- and dimethylation of 'Lys-3'. This is Protein N-terminal and lysine N-methyltransferase efm7 from Schizosaccharomyces pombe (strain 972 / ATCC 24843) (Fission yeast).